The following is a 1500-amino-acid chain: Carbamoyl-phosphate synthase [ammonia], mitochondrial (1500 aa).

The transit peptide at 1–38 directs the protein to the mitochondrion; sequence MTRILTACKVVKTLKSGFGFANVTTKRQWDFSRPGIRL. The interval 39-218 is anthranilate phosphoribosyltransferase homolog; the sequence is LSVKAKTAHI…VKVFGKGNPT (180 aa). 4 positions are modified to N6-acetyllysine; alternate: Lys-44, Lys-55, Lys-57, and Lys-119. Lys-44, Lys-55, Lys-57, and Lys-119 each carry N6-succinyllysine; alternate. Lys-55 is subject to N6-glutaryllysine; alternate. Residue Ser-148 is modified to Phosphoserine. N6-acetyllysine; alternate is present on residues Lys-157 and Lys-171. Lys-157 bears the N6-succinyllysine; alternate mark. Lys-171 bears the N6-glutaryllysine; alternate mark. Lys-176 bears the N6-glutaryllysine mark. Position 182 is an N6-acetyllysine (Lys-182). Ser-189 carries the post-translational modification Phosphoserine. At Lys-197 the chain carries N6-acetyllysine. 5 positions are modified to N6-acetyllysine; alternate: Lys-207, Lys-210, Lys-214, Lys-219, and Lys-228. Residue Lys-207 is modified to N6-succinyllysine; alternate. N6-glutaryllysine; alternate is present on residues Lys-207, Lys-210, Lys-214, Lys-219, and Lys-228. At Lys-214 the chain carries N6-succinyllysine; alternate. The 186-residue stretch at 219 to 404 folds into the Glutamine amidotransferase type-1 domain; that stretch reads KVVAVDCGIK…FSLIKKGKGT (186 aa). At Lys-237 the chain carries N6-glutaryllysine. Lys-279 carries the N6-acetyllysine modification. An N6-acetyllysine; alternate mark is found at Lys-280, Lys-287, Lys-307, and Lys-310. Lys-280 carries the post-translational modification N6-glutaryllysine; alternate. Lys-287 and Lys-307 each carry N6-succinyllysine; alternate. Lys-307 and Lys-310 each carry N6-glutaryllysine; alternate. N6-succinyllysine is present on Lys-400. 2 positions are modified to N6-succinyllysine; alternate: Lys-402 and Lys-412. N6-glutaryllysine; alternate is present on residues Lys-402, Lys-412, Lys-453, and Lys-458. N6-acetyllysine; alternate occurs at positions 412, 453, 458, 522, 527, and 532. An N6-succinyllysine; alternate mark is found at Lys-458, Lys-522, and Lys-527. Residues Lys-527 and Lys-532 each carry the N6-glutaryllysine; alternate modification. Ser-537 carries the phosphoserine; alternate modification. The O-linked (GlcNAc) serine; alternate glycan is linked to Ser-537. Ser-540 is modified (phosphoserine). One can recognise an ATP-grasp 1 domain in the interval 551 to 743; the sequence is SDKLNEINEK…LAFIAAKIAL (193 aa). Residues Lys-553 and Lys-560 each carry the N6-acetyllysine; alternate modification. Residues Lys-553 and Lys-560 each carry the N6-succinyllysine; alternate modification. Residue Lys-553 is modified to N6-glutaryllysine; alternate. Ser-569 carries the post-translational modification Phosphoserine. Residues Lys-575, Lys-603, and Lys-612 each carry the N6-acetyllysine; alternate modification. Residues Lys-575, Lys-603, and Lys-612 each carry the N6-succinyllysine; alternate modification. The residue at position 630 (Lys-630) is an N6-acetyllysine. An N6-glutaryllysine modification is found at Lys-728. 12 positions are modified to N6-acetyllysine; alternate: Lys-751, Lys-757, Lys-772, Lys-793, Lys-811, Lys-831, Lys-840, Lys-841, Lys-856, Lys-875, Lys-889, and Lys-892. 2 positions are modified to N6-succinyllysine; alternate: Lys-751 and Lys-757. Lys-757, Lys-772, Lys-793, and Lys-811 each carry N6-glutaryllysine; alternate. An N6-succinyllysine; alternate modification is found at Lys-793. 2 positions are modified to N6-succinyllysine; alternate: Lys-831 and Lys-840. Residues Lys-841, Lys-856, Lys-875, Lys-889, and Lys-892 each carry the N6-glutaryllysine; alternate modification. An N6-succinyllysine; alternate mark is found at Lys-875, Lys-889, and Lys-892. Ser-896 and Ser-898 each carry phosphoserine. Lys-908, Lys-915, and Lys-919 each carry N6-acetyllysine; alternate. An N6-glutaryllysine; alternate mark is found at Lys-908, Lys-915, and Lys-919. N6-succinyllysine; alternate occurs at positions 915 and 919. At Lys-935 the chain carries N6-acetyllysine. At Ser-1036 the chain carries Phosphoserine. Lys-1074 is modified (N6-acetyllysine; alternate). The residue at position 1074 (Lys-1074) is an N6-succinyllysine; alternate. Lys-1074 carries the post-translational modification N6-glutaryllysine; alternate. 3 positions are modified to phosphoserine: Ser-1079, Ser-1090, and Ser-1093. The ATP-grasp 2 domain occupies 1093–1284; the sequence is SAVLDELKVA…FIDVATKVMI (192 aa). An N6-acetyllysine; alternate modification is found at Lys-1100. Lys-1100 carries the N6-succinyllysine; alternate modification. Lys-1149 carries the N6-succinyllysine modification. 2 positions are modified to N6-acetyllysine; alternate: Lys-1168 and Lys-1183. N6-succinyllysine; alternate is present on residues Lys-1168 and Lys-1183. N6-glutaryllysine; alternate is present on residues Lys-1168 and Lys-1183. Ser-1203 carries the post-translational modification Phosphoserine. The residue at position 1222 (Lys-1222) is an N6-acetyllysine. N6-glutaryllysine is present on Lys-1224. Lys-1232, Lys-1269, and Lys-1291 each carry N6-acetyllysine; alternate. 3 positions are modified to N6-succinyllysine; alternate: Lys-1232, Lys-1269, and Lys-1291. An O-linked (GlcNAc) serine glycan is attached at Ser-1331. Thr-1332 carries O-linked (GlcNAc) threonine glycosylation. In terms of domain architecture, MGS-like spans 1355–1500; it reads FKIPQKGILI…YRQYSAGKAA (146 aa). Lys-1356 bears the N6-acetyllysine; alternate mark. An N6-succinyllysine; alternate mark is found at Lys-1356 and Lys-1360. N6-glutaryllysine; alternate occurs at positions 1356 and 1360. Residues Thr-1391, Thr-1394, and Trp-1410 each contribute to the N-acetyl-L-glutamate site. Ser-1419 and Ser-1431 each carry phosphoserine. N-acetyl-L-glutamate is bound by residues Asn-1437 and Asn-1440. An N6-acetyllysine; alternate modification is found at Lys-1444. Lys-1444 bears the N6-succinyllysine; alternate mark. Asn-1449 lines the N-acetyl-L-glutamate pocket. Lys-1471, Lys-1479, and Lys-1486 each carry N6-acetyllysine; alternate. Residues Lys-1471, Lys-1479, and Lys-1486 each carry the N6-succinyllysine; alternate modification. Lys-1479 and Lys-1486 each carry N6-glutaryllysine; alternate.

As to quaternary structure, can form homooligomers (monomers as predominant form and dimers). In terms of assembly, (Microbial infection) Interacts with P.berghei (ANKA strain) phospholipid scramblase PLSCR; the interaction is involved in the interaction between parasite sporozoites and host hepatocytes. Undergoes proteolytic cleavage in the C-terminal region corresponding to the loss of approximately 12 AA residues from the C-terminus. Post-translationally, acetylation of Lys-287, Lys-603, Lys-841 and Lys-1291 is observed in liver mitochondria from fasted mice but not from fed mice. In terms of processing, succinylated at Lys-44, Lys-287 and Lys-1291. Desuccinylated at Lys-1291 by SIRT5, leading to activation. Glutarylated. Glutarylation levels increase during fasting. Deglutarylated by SIRT5 at Lys-55, Lys-219, Lys-412, Lys-889, Lys-892, Lys-915, Lys-1360 and Lys-1486, leading to activation. In terms of tissue distribution, expressed in hepatocytes (at protein level).

The protein resides in the mitochondrion. It is found in the nucleus. It localises to the nucleolus. The protein localises to the cell membrane. It carries out the reaction hydrogencarbonate + NH4(+) + 2 ATP = carbamoyl phosphate + 2 ADP + phosphate + 2 H(+). Requires N-acetyl-L-glutamate (NAG) as an allosteric activator. Involved in the urea cycle of ureotelic animals where the enzyme plays an important role in removing excess ammonia from the cell. In Mus musculus (Mouse), this protein is Carbamoyl-phosphate synthase [ammonia], mitochondrial (Cps1).